The following is a 436-amino-acid chain: Eukaryotic translation initiation factor 5 (436 aa).

27 to 34 (GKGNGIKT) serves as a coordination point for GTP. The segment at 177-203 (NSDKGSSNDDDDDDWEPEPVEPNGMLS) is disordered. The span at 184 to 195 (NDDDDDDWEPEP) shows a compositional bias: acidic residues. In terms of domain architecture, W2 spans 216–379 (EKSEEQRLDM…KEAEEETEEE (164 aa)). Positions 396 to 408 (LRQQKEKAAREAQ) are enriched in basic and acidic residues. A disordered region spans residues 396–436 (LRQQKEKAAREAQQKSAKATNGNAAAASGANDEEDLDIDDI). Over residues 409 to 425 (QKSAKATNGNAAAASGA) the composition is skewed to low complexity. Acidic residues predominate over residues 426-436 (NDEEDLDIDDI).

This sequence belongs to the eIF-2-beta/eIF-5 family.

Functionally, catalyzes the hydrolysis of GTP bound to the 40S ribosomal initiation complex (40S.mRNA.Met-tRNA[F].eIF-2.GTP) with the subsequent joining of a 60S ribosomal subunit resulting in the release of eIF-2 and the guanine nucleotide. The subsequent joining of a 60S ribosomal subunit results in the formation of a functional 80S initiation complex (80S.mRNA.Met-tRNA[F]). This chain is Eukaryotic translation initiation factor 5, found in Caenorhabditis elegans.